Here is a 299-residue protein sequence, read N- to C-terminus: Probable lipid kinase YegS (299 aa).

The DAGKc domain occupies 2-133 (AEFPASLLIL…IDMAQVNKQT (132 aa)). Residues threonine 40, 66-72 (GDGTINE), and threonine 95 each bind ATP. Residues leucine 215, aspartate 218, and leucine 220 each contribute to the Mg(2+) site. Glutamate 271 acts as the Proton acceptor in catalysis.

Belongs to the diacylglycerol/lipid kinase family. YegS lipid kinase subfamily. Mg(2+) serves as cofactor. It depends on Ca(2+) as a cofactor.

The protein localises to the cytoplasm. Its function is as follows. Probably phosphorylates lipids; the in vivo substrate is unknown. The sequence is that of Probable lipid kinase YegS from Shigella boydii serotype 18 (strain CDC 3083-94 / BS512).